Consider the following 63-residue polypeptide: Toxin Cn11 (63 aa).

The LCN-type CS-alpha/beta domain maps to 2–63 (RDGYPVDEKG…KVWTYETNTC (62 aa)). Intrachain disulfides connect Cys12–Cys63, Cys16–Cys37, Cys23–Cys44, and Cys27–Cys46.

It belongs to the long (4 C-C) scorpion toxin superfamily. Sodium channel inhibitor family. Expressed by the venom gland.

Its subcellular location is the secreted. First blocker of sodium channels (Nav) found in scorpions. Is lethal to crustaceans (Cambarellus montezumae), less toxic to insects (crickets) and non-toxic to mammals (mice) at the doses assayed. The polypeptide is Toxin Cn11 (Centruroides noxius (Mexican scorpion)).